The primary structure comprises 520 residues: Cholesterol side-chain cleavage enzyme, mitochondrial (520 aa).

The transit peptide at 1–39 (MLARGLPLRSALVKACPPILSTVGEGWGHHRVGTGEGAG) directs the protein to the mitochondrion. Cys461 contributes to the heme binding site.

It belongs to the cytochrome P450 family. Interacts with FDX1/adrenodoxin. The cofactor is heme. As to expression, detected in adrenal cortex and corpus luteum (at protein level).

It localises to the mitochondrion inner membrane. The enzyme catalyses 6 reduced [adrenodoxin] + cholesterol + 3 O2 + 6 H(+) = 4-methylpentanal + pregnenolone + 6 oxidized [adrenodoxin] + 4 H2O. The catalysed reaction is 2 reduced [adrenodoxin] + cholesterol + O2 + 2 H(+) = (22R)-hydroxycholesterol + 2 oxidized [adrenodoxin] + H2O. It catalyses the reaction (22R)-hydroxycholesterol + 2 reduced [adrenodoxin] + O2 + 2 H(+) = (20R,22R)-20,22-dihydroxycholesterol + 2 oxidized [adrenodoxin] + H2O. It carries out the reaction (20R,22R)-20,22-dihydroxycholesterol + 2 reduced [adrenodoxin] + O2 + 2 H(+) = 4-methylpentanal + pregnenolone + 2 oxidized [adrenodoxin] + 2 H2O. The protein operates within lipid metabolism; C21-steroid hormone metabolism. Its pathway is steroid metabolism; cholesterol metabolism. A cytochrome P450 monooxygenase that catalyzes the side-chain hydroxylation and cleavage of cholesterol to pregnenolone, the precursor of most steroid hormones. Catalyzes three sequential oxidation reactions of cholesterol, namely the hydroxylation at C22 followed with the hydroxylation at C20 to yield 20R,22R-hydroxycholesterol that is further cleaved between C20 and C22 to yield the C21-steroid pregnenolone and 4-methylpentanal. Mechanistically, uses molecular oxygen inserting one oxygen atom into a substrate and reducing the second into a water molecule. Two electrons are provided by NADPH via a two-protein mitochondrial transfer system comprising flavoprotein FDXR (adrenodoxin/ferredoxin reductase) and nonheme iron-sulfur protein FDX1 or FDX2 (adrenodoxin/ferredoxin). In Bos taurus (Bovine), this protein is Cholesterol side-chain cleavage enzyme, mitochondrial (CYP11A1).